The chain runs to 55 residues: Large ribosomal subunit protein bL33 (55 aa).

This sequence belongs to the bacterial ribosomal protein bL33 family.

This is Large ribosomal subunit protein bL33 from Mesorhizobium japonicum (strain LMG 29417 / CECT 9101 / MAFF 303099) (Mesorhizobium loti (strain MAFF 303099)).